We begin with the raw amino-acid sequence, 153 residues long: Histone H2B.10 (153 aa).

Basic and acidic residues-rich tracts occupy residues 1 to 28 and 36 to 53; these read MAPKAEKKPAAKKPAEEEPAAEKAEKAP and EKRLPAGKAEKSSGEGKK. The segment at 1–61 is disordered; that stretch reads MAPKAEKKPA…KKAGRKKAKK (61 aa). N6-acetyllysine occurs at positions 7 and 37. Lys-149 participates in a covalent cross-link: Glycyl lysine isopeptide (Lys-Gly) (interchain with G-Cter in ubiquitin).

This sequence belongs to the histone H2B family. The nucleosome is a histone octamer containing two molecules each of H2A, H2B, H3 and H4 assembled in one H3-H4 heterotetramer and two H2A-H2B heterodimers. The octamer wraps approximately 147 bp of DNA. Post-translationally, can be acetylated to form H2BK6ac and H2BK33ac. Monoubiquitinated by BRE1 to form H2BK143ub1 and deubiquitinated by UBP26. Required for heterochromatic histone H3 di- and trimethylation at H3K4me. May give a specific tag for epigenetic transcriptional activation.

The protein localises to the nucleus. The protein resides in the chromosome. In terms of biological role, core component of nucleosome. Nucleosomes wrap and compact DNA into chromatin, limiting DNA accessibility to the cellular machineries which require DNA as a template. Histones thereby play a central role in transcription regulation, DNA repair, DNA replication and chromosomal stability. DNA accessibility is regulated via a complex set of post-translational modifications of histones, also called histone code, and nucleosome remodeling. The chain is Histone H2B.10 (H2B.10) from Oryza sativa subsp. indica (Rice).